A 467-amino-acid chain; its full sequence is ATP synthase subunit beta (467 aa).

156-163 (GGAGVGKT) is an ATP binding site.

The protein belongs to the ATPase alpha/beta chains family. F-type ATPases have 2 components, CF(1) - the catalytic core - and CF(0) - the membrane proton channel. CF(1) has five subunits: alpha(3), beta(3), gamma(1), delta(1), epsilon(1). CF(0) has three main subunits: a(1), b(2) and c(9-12). The alpha and beta chains form an alternating ring which encloses part of the gamma chain. CF(1) is attached to CF(0) by a central stalk formed by the gamma and epsilon chains, while a peripheral stalk is formed by the delta and b chains.

It is found in the cell inner membrane. The enzyme catalyses ATP + H2O + 4 H(+)(in) = ADP + phosphate + 5 H(+)(out). Its function is as follows. Produces ATP from ADP in the presence of a proton gradient across the membrane. The catalytic sites are hosted primarily by the beta subunits. This chain is ATP synthase subunit beta, found in Cupriavidus necator (strain ATCC 17699 / DSM 428 / KCTC 22496 / NCIMB 10442 / H16 / Stanier 337) (Ralstonia eutropha).